A 263-amino-acid polypeptide reads, in one-letter code: Linear gramicidin dehydrogenase LgrE (263 aa).

S96 is a catalytic residue.

This sequence belongs to the thioesterase family.

Its function is as follows. In the final step of gramicidin biosynthesis, reduces the pentadecapeptide-aldehyde intermediate, that is released from the terminal module of the non-ribosomal peptide synthetase LgrD, to the final product ethanolamine-containing gramicidin. The polypeptide is Linear gramicidin dehydrogenase LgrE (lgrE) (Brevibacillus parabrevis).